The chain runs to 349 residues: Protein RecA (349 aa).

65–72 (GPESSGKT) is a binding site for ATP.

Belongs to the RecA family.

The protein resides in the cytoplasm. Its function is as follows. Can catalyze the hydrolysis of ATP in the presence of single-stranded DNA, the ATP-dependent uptake of single-stranded DNA by duplex DNA, and the ATP-dependent hybridization of homologous single-stranded DNAs. It interacts with LexA causing its activation and leading to its autocatalytic cleavage. The chain is Protein RecA from Acinetobacter baumannii (strain AB307-0294).